The primary structure comprises 807 residues: Putative transmembrane protein ORF807 (807 aa).

5 helical membrane passes run 210 to 230, 234 to 254, 270 to 290, 459 to 479, and 657 to 677; these read VLMLICLLIYAGCYASYSDIL, GLSTVGAGVNAKVPVTAIVYF, VTIQLYALIWVGISTTNFVIL, ILIGVGAVALIVIGTVALVLT, and VALLSAIASILVNMFLFMPLV.

It is found in the host membrane. This chain is Putative transmembrane protein ORF807, found in Acidianus filamentous virus 1 (isolate United States/Yellowstone) (AFV-1).